Here is a 397-residue protein sequence, read N- to C-terminus: Phosphoglycerate kinase (397 aa).

Substrate-binding positions include 21–23 (DFN), arginine 37, 60–63 (HLGR), arginine 119, and arginine 152. ATP-binding positions include lysine 203, glycine 294, glutamate 325, and 354-357 (GGDS).

Belongs to the phosphoglycerate kinase family. As to quaternary structure, monomer.

The protein resides in the cytoplasm. The catalysed reaction is (2R)-3-phosphoglycerate + ATP = (2R)-3-phospho-glyceroyl phosphate + ADP. Its pathway is carbohydrate degradation; glycolysis; pyruvate from D-glyceraldehyde 3-phosphate: step 2/5. The chain is Phosphoglycerate kinase from Chlorobium phaeovibrioides (strain DSM 265 / 1930) (Prosthecochloris vibrioformis (strain DSM 265)).